The following is a 220-amino-acid chain: A-type ATP synthase subunit K (220 aa).

A run of 6 helical transmembrane segments spans residues 5–25 (LILGAVGAGLAVGIAGLGSGI), 63–83 (FLVAILILFVFKTVSPWAMFA), 90–110 (LAGLSAIGQGIAASAGLGAVA), 125–145 (LPETQAIYGLLIAILLLVGVF), 155–175 (AALGAGFAVGFAGLSGIGQGI), and 195–215 (LVLAVMPETFAIFGLLIAILI).

Belongs to the V-ATPase proteolipid subunit family. As to quaternary structure, the A-type ATPase is composed of subunits A(3), B(3), C, D, E(1 or 2), F, H(2), I and K(x). Subunit K dimerizes and may form higher oligomers.

The protein localises to the cell membrane. In terms of biological role, component of the A-type ATP synthase that produces ATP from ADP in the presence of a proton gradient across the membrane. In Methanocaldococcus jannaschii (strain ATCC 43067 / DSM 2661 / JAL-1 / JCM 10045 / NBRC 100440) (Methanococcus jannaschii), this protein is A-type ATP synthase subunit K.